Reading from the N-terminus, the 339-residue chain is 7,8-didemethyl-8-hydroxy-5-deazariboflavin synthase (339 aa).

Positions 13–258 constitute a Radical SAM core domain; the sequence is ITYSKNIFIP…RDTDVSIQVP (246 aa). Residues Cys27, Cys31, and Cys34 each coordinate [4Fe-4S] cluster.

The protein belongs to the radical SAM superfamily. CofG family. In terms of assembly, consists of two subunits, CofG and CofH. [4Fe-4S] cluster is required as a cofactor.

It carries out the reaction 5-amino-5-(4-hydroxybenzyl)-6-(D-ribitylimino)-5,6-dihydrouracil + S-adenosyl-L-methionine = 7,8-didemethyl-8-hydroxy-5-deazariboflavin + 5'-deoxyadenosine + L-methionine + NH4(+) + H(+). It participates in cofactor biosynthesis; coenzyme F0 biosynthesis. Its function is as follows. Catalyzes the radical-mediated synthesis of 7,8-didemethyl-8-hydroxy-5-deazariboflavin from 5-amino-5-(4-hydroxybenzyl)-6-(D-ribitylimino)-5,6-dihydrouracil. The protein is 7,8-didemethyl-8-hydroxy-5-deazariboflavin synthase of Methanobrevibacter smithii (strain ATCC 35061 / DSM 861 / OCM 144 / PS).